We begin with the raw amino-acid sequence, 188 residues long: MGLLILGLGNPGLEFSLTRHNVGFSLLDKIVSKNGLFLKRKKKYEYSELRVISRRVILVKPLTYMNLSGSLFPSIFSDFYMCIKNLLVVLDNVDLPLGKCRLKERGGMSTHNGLKSISSVLGSSNYSRLYIGVGSNVMRDIKSFVLSRFCKDEIDRLEKLYDFLSDELIDISESNFKDKVQKINSSNF.

Phe15 is a tRNA binding site. His20 serves as the catalytic Proton acceptor. The tRNA site is built by Tyr64, Asn66, and Asn112.

This sequence belongs to the PTH family. Monomer.

Its subcellular location is the cytoplasm. It carries out the reaction an N-acyl-L-alpha-aminoacyl-tRNA + H2O = an N-acyl-L-amino acid + a tRNA + H(+). Hydrolyzes ribosome-free peptidyl-tRNAs (with 1 or more amino acids incorporated), which drop off the ribosome during protein synthesis, or as a result of ribosome stalling. Functionally, catalyzes the release of premature peptidyl moieties from peptidyl-tRNA molecules trapped in stalled 50S ribosomal subunits, and thus maintains levels of free tRNAs and 50S ribosomes. In Borreliella afzelii (strain PKo) (Borrelia afzelii), this protein is Peptidyl-tRNA hydrolase.